The primary structure comprises 611 residues: MDPGAGSETSLTVNEQVIVMSGHETIRVLEVGVDAQLPAEEESKGLEGVAAEGSQSGDPAEASQAAGEAGPDNLGSSAEATVKSPPGIPPSPATAIATFSQAPSQPQASQTLTPLAVQAAPQVLTQENLATVLTGVMVPAGAVTQPLLIPISIAGQVAGQQGLAVWTIPTATVAALPGLTAASPTGGVFKPPLAGLQAAAVLNTALPAPVQAAAPVQASSTAQPRPPAQPQTLFQTQPLLQTTPAILPQPTAATAAAPTPKPVDTPPQITVQPAGFAFSPGIISAASLGGQTQILGSLTTAPVITSAIPSMPGISSQILTNAQGQVIGTLPWVVNSASVAAPAPAQSLQVQAVTPQLLLNAQGQVIATLASSPLPPPVAVRKPSTPESPAKSEVQPIQPTPTVPQPAVVIASPAPAAKPSASAPIPITCSETPTVSQLVSKPHTPSLDEDGINLEEIREFAKNFKIRRLSLGLTQTQVGQALTATEGPAYSQSAICRFEKLDITPKSAQKLKPVLEKWLNEAELRNQEGQQNLMEFVGGEPSKKRKRRTSFTPQAIEALNAYFEKNPLPTGQEITEIAKELNYDREVVRVWFCNRRQTLKNTSKLNVFQIP.

The segment at 62–93 is disordered; that stretch reads ASQAAGEAGPDNLGSSAEATVKSPPGIPPSPA. One can recognise a POU-specific domain in the interval 449–523; it reads EDGINLEEIR…VLEKWLNEAE (75 aa). Residues 544–603 constitute a DNA-binding region (homeobox); the sequence is KRKRRTSFTPQAIEALNAYFEKNPLPTGQEITEIAKELNYDREVVRVWFCNRRQTLKNTS.

It belongs to the POU transcription factor family. Class-6 subfamily. As to expression, in the embryo, expressed exclusively in the developing brain, whereas in the adult its expression is restricted to brain, heart, skeletal muscle and lung. In the brain, the highest expression levels are found in specific cell layers of the cortex, the olfactory bulb, the hippocampus and the cerebellum.

The protein resides in the nucleus. Its function is as follows. Transcription factor that binds preferentially to a variant of the octamer motif (5'-ATGATAAT-3'). This is POU domain, class 6, transcription factor 1 (POU6F1) from Homo sapiens (Human).